Consider the following 638-residue polypeptide: Threonine--tRNA ligase (638 aa).

A TGS domain is found at 1 to 61 (MPKITLPDGT…KNDSKVVIIT (61 aa)). Positions 242-533 (DHRKLGKKHS…LIEQYEAKFP (292 aa)) are catalytic. Residues Cys-333, His-384, and His-510 each contribute to the Zn(2+) site.

It belongs to the class-II aminoacyl-tRNA synthetase family. Homodimer. Zn(2+) is required as a cofactor.

It localises to the cytoplasm. It carries out the reaction tRNA(Thr) + L-threonine + ATP = L-threonyl-tRNA(Thr) + AMP + diphosphate + H(+). Its function is as follows. Catalyzes the attachment of threonine to tRNA(Thr) in a two-step reaction: L-threonine is first activated by ATP to form Thr-AMP and then transferred to the acceptor end of tRNA(Thr). Also edits incorrectly charged L-seryl-tRNA(Thr). This Prochlorococcus marinus (strain MIT 9515) protein is Threonine--tRNA ligase.